A 456-amino-acid chain; its full sequence is Potassium voltage-gated channel subfamily A member 7 (456 aa).

Residues 144 to 164 (VLAVVSVLVILVSIVVFCLET) traverse the membrane as a helical segment. Asparagine 191 is a glycosylation site (N-linked (GlcNAc...) asparagine). Residues 209-229 (FFVVETLCICWFSFELLVRLL) form a helical membrane-spanning segment. Cysteine 231 carries S-palmitoyl cysteine lipidation. A helical membrane pass occupies residues 241–261 (VMNLIDFVAILPYFVALGTEL). The helical; Voltage-sensor transmembrane segment at 276–295 (ILRVIRLVRVFRIFKLSRHS) threads the bilayer. A helical transmembrane segment spans residues 312-332 (LGLLIFFLFIGVVLFSSAVYF). Positions 358–363 (TVGYGD) match the Selectivity filter motif. Residues 373–393 (IVGSLCAIAGVLTISLPVPVI) form a helical membrane-spanning segment.

The protein belongs to the potassium channel family. A (Shaker) (TC 1.A.1.2) subfamily. Kv1.7/KCNA7 sub-subfamily. As to quaternary structure, heterotetramer of potassium channel proteins. In terms of tissue distribution, highly expressed in skeletal muscle, heart and kidney.

Its subcellular location is the membrane. The catalysed reaction is K(+)(in) = K(+)(out). Its function is as follows. Mediates the voltage-dependent potassium ion permeability of excitable membranes. Assuming opened or closed conformations in response to the voltage difference across the membrane, the protein forms a potassium-selective channel through which potassium ions may pass in accordance with their electrochemical gradient. The protein is Potassium voltage-gated channel subfamily A member 7 (KCNA7) of Homo sapiens (Human).